The sequence spans 445 residues: Signal recognition particle 54 kDa protein (445 aa).

GTP is bound by residues 102-109, 184-188, and 244-247; these read GVQGSGKT, DTAGR, and TKMD.

It belongs to the GTP-binding SRP family. SRP54 subfamily. Part of the signal recognition particle protein translocation system, which is composed of SRP and FtsY. Archaeal SRP consists of a 7S RNA molecule of 300 nucleotides and two protein subunits: SRP54 and SRP19.

Its subcellular location is the cytoplasm. It catalyses the reaction GTP + H2O = GDP + phosphate + H(+). In terms of biological role, involved in targeting and insertion of nascent membrane proteins into the cytoplasmic membrane. Binds to the hydrophobic signal sequence of the ribosome-nascent chain (RNC) as it emerges from the ribosomes. The SRP-RNC complex is then targeted to the cytoplasmic membrane where it interacts with the SRP receptor FtsY. This is Signal recognition particle 54 kDa protein from Sulfurisphaera tokodaii (strain DSM 16993 / JCM 10545 / NBRC 100140 / 7) (Sulfolobus tokodaii).